Consider the following 414-residue polypeptide: Glucose-1-phosphate adenylyltransferase (414 aa).

Residues G164, 184-185, and S204 each bind alpha-D-glucose 1-phosphate; that span reads EK.

The protein belongs to the bacterial/plant glucose-1-phosphate adenylyltransferase family. As to quaternary structure, homotetramer.

It catalyses the reaction alpha-D-glucose 1-phosphate + ATP + H(+) = ADP-alpha-D-glucose + diphosphate. It participates in glycan biosynthesis; glycogen biosynthesis. In terms of biological role, involved in the biosynthesis of ADP-glucose, a building block required for the elongation reactions to produce glycogen. Catalyzes the reaction between ATP and alpha-D-glucose 1-phosphate (G1P) to produce pyrophosphate and ADP-Glc. This is Glucose-1-phosphate adenylyltransferase from Acidothermus cellulolyticus (strain ATCC 43068 / DSM 8971 / 11B).